We begin with the raw amino-acid sequence, 196 residues long: FMN-dependent NADH:quinone oxidoreductase (196 aa).

Serine 10 contacts FMN.

Belongs to the azoreductase type 1 family. In terms of assembly, homodimer. FMN is required as a cofactor.

It carries out the reaction 2 a quinone + NADH + H(+) = 2 a 1,4-benzosemiquinone + NAD(+). The enzyme catalyses N,N-dimethyl-1,4-phenylenediamine + anthranilate + 2 NAD(+) = 2-(4-dimethylaminophenyl)diazenylbenzoate + 2 NADH + 2 H(+). Functionally, quinone reductase that provides resistance to thiol-specific stress caused by electrophilic quinones. Also exhibits azoreductase activity. Catalyzes the reductive cleavage of the azo bond in aromatic azo compounds to the corresponding amines. The polypeptide is FMN-dependent NADH:quinone oxidoreductase (Cereibacter sphaeroides (strain KD131 / KCTC 12085) (Rhodobacter sphaeroides)).